Reading from the N-terminus, the 263-residue chain is 3-methyl-2-oxobutanoate hydroxymethyltransferase (263 aa).

The Mg(2+) site is built by D45 and D84. 3-methyl-2-oxobutanoate is bound by residues 45–46 (DS), D84, and K112. E114 contributes to the Mg(2+) binding site. The active-site Proton acceptor is the E180.

The protein belongs to the PanB family. As to quaternary structure, homodecamer; pentamer of dimers. The cofactor is Mg(2+).

The protein localises to the cytoplasm. It catalyses the reaction 3-methyl-2-oxobutanoate + (6R)-5,10-methylene-5,6,7,8-tetrahydrofolate + H2O = 2-dehydropantoate + (6S)-5,6,7,8-tetrahydrofolate. It functions in the pathway cofactor biosynthesis; (R)-pantothenate biosynthesis; (R)-pantoate from 3-methyl-2-oxobutanoate: step 1/2. Catalyzes the reversible reaction in which hydroxymethyl group from 5,10-methylenetetrahydrofolate is transferred onto alpha-ketoisovalerate to form ketopantoate. This chain is 3-methyl-2-oxobutanoate hydroxymethyltransferase, found in Enterobacter sp. (strain 638).